A 350-amino-acid chain; its full sequence is MSYEKHSDAKASRYAWNQPWNPFEVTLSDPTYPMNLEEKNQIPYRFQSVPDDVPEVPHIESRYKNLPGNNIYLCCGRLQMSSQYKAFLISLFALILPGVLFFIFSAFWLWHHVSPAVPITFAYLYALAVVSMFKCSTADPGILPRNAYSLTYNPAHPWSVIPEDRKVLVGSTRSDSVFVNTVYCHTCHLYRPPRASHCHLCDNCVEYLDHHCIWLNTCIGRRNYRYYFIFLLSVVLSALYLTGLGFYTSIGSFHESTDTNFAAHLRRPWAGVSFFLGIYGALGAILPGILFCYQCYLISVGQNVHEYLRAKSTETEDVHPFHDSIWLNFLVVLCRPKNVSYVRPTRKSYV.

Topologically, residues 1–86 are cytoplasmic; it reads MSYEKHSDAK…RLQMSSQYKA (86 aa). Residues 87–107 form a helical membrane-spanning segment; sequence FLISLFALILPGVLFFIFSAF. The Lumenal portion of the chain corresponds to 108–112; the sequence is WLWHH. The chain crosses the membrane as a helical span at residues 113-133; it reads VSPAVPITFAYLYALAVVSMF. Residues 134–225 are Cytoplasmic-facing; it reads KCSTADPGIL…NTCIGRRNYR (92 aa). The DHHC domain maps to 182–232; the sequence is VYCHTCHLYRPPRASHCHLCDNCVEYLDHHCIWLNTCIGRRNYRYYFIFLL. The S-palmitoyl cysteine intermediate role is filled by Cys212. Residues 226 to 246 form a helical membrane-spanning segment; the sequence is YYFIFLLSVVLSALYLTGLGF. The Lumenal segment spans residues 247-270; sequence YTSIGSFHESTDTNFAAHLRRPWA. A helical membrane pass occupies residues 271–291; the sequence is GVSFFLGIYGALGAILPGILF. Over 292 to 350 the chain is Cytoplasmic; it reads CYQCYLISVGQNVHEYLRAKSTETEDVHPFHDSIWLNFLVVLCRPKNVSYVRPTRKSYV.

It belongs to the DHHC palmitoyltransferase family. ERF2/ZDHHC9 subfamily. As to quaternary structure, interacts with erf4. In terms of processing, autopalmitoylated.

The protein resides in the endoplasmic reticulum membrane. It is found in the golgi apparatus. The protein localises to the golgi stack membrane. It catalyses the reaction L-cysteinyl-[protein] + hexadecanoyl-CoA = S-hexadecanoyl-L-cysteinyl-[protein] + CoA. In terms of biological role, the erf2-erf4 complex is a palmitoyltransferase with a major role in driving sexual development. Palmitoylates ras1. Palmitoylates isp3. Palmitoylates rho3. This Schizosaccharomyces pombe (strain 972 / ATCC 24843) (Fission yeast) protein is Palmitoyltransferase erf2.